The primary structure comprises 742 residues: mRNA export factor ICP27 homolog (742 aa).

Over residues 1–11 the composition is skewed to basic and acidic residues; the sequence is MELHSRGRHDA. The tract at residues 1–202 is disordered; it reads MELHSRGRHD…NHHGSSAGPQ (202 aa). Residues 72–85 are compositionally biased toward basic residues; it reads SHHHRPCVPARRPR. Over residues 153-171 the composition is skewed to basic and acidic residues; the sequence is KSYDNDDGEPHHHGGDSTH. Over residues 179-202 the composition is skewed to polar residues; the sequence is CPTTFGSSHPSSANNHHGSSAGPQ. Zn(2+)-binding residues include Cys387, His494, Cys496, and Cys501. The segment at 387–501 adopts a CHC2-type zinc-finger fold; sequence CILDHQDGWG…QCHECQNEMC (115 aa). A disordered region spans residues 540–742; that stretch reads ASNHATAGGQ…MLCYSDDMDD (203 aa). A compositionally biased stretch (basic and acidic residues) spans 578–587; the sequence is YDKKDREGSH. Over residues 614 to 626 the composition is skewed to acidic residues; sequence GELEEDEDSDDAS. The span at 692–703 shows a compositional bias: polar residues; that stretch reads QSANGNHSTTAT.

This sequence belongs to the HHV-1 ICP27 protein family. In terms of assembly, self-associates and forms high-molecular-mass complexes. Interacts with host DDX39A and DDX39B; these interactions are required for UL69 function in mRNA export. Interacts with host SUPT6H, EIF4A1 and PABPC1. Post-translationally, phosphorylated by UL97 and host CDK1, CDK7 and CD9. Phosphorylation by CDKs impacts on UL69 nuclear localization and activity.

The protein localises to the virion tegument. Its subcellular location is the virion. The protein resides in the host nucleus. It is found in the host cytoplasm. Its function is as follows. Immediate early (EI) protein that plays many roles during productive infection including regulation of host cell cycle progression, regulation of viral gene expression or nuclear export of intronless viral RNAs. Acts as a transcriptional transactivator via interaction with the cellular transcription elongation factor SUPT6H and as a nuclear RNA export factor via interaction with UAP56, a component of the cellular mRNA export machinery. This Human cytomegalovirus (strain Merlin) (HHV-5) protein is mRNA export factor ICP27 homolog.